Here is a 1189-residue protein sequence, read N- to C-terminus: Pumilio homolog 1 (1189 aa).

5 disordered regions span residues 24–65 (QHAQ…SSPV), 233–288 (SCLR…QNGI), 491–525 (QQTT…GQQT), 614–652 (AGTT…NNSL), and 743–774 (GPVG…SSLN). Over residues 45–58 (QAQPQPAANQALAA) the composition is skewed to low complexity. Residues 250 to 277 (NDKGDKKNKGTFDGDKLGDLKEEGDVMD) are compositionally biased toward basic and acidic residues. Over residues 491–503 (QQTTQQTQQGQQQ) the composition is skewed to low complexity. Positions 512–525 (RPLTPNQNQQGQQT) are enriched in polar residues. 2 stretches are compositionally biased toward low complexity: residues 627 to 652 (QQPQ…NNSL) and 764 to 774 (LSSHGSSSSLN). The PUM-HD domain occupies 829-1171 (GRSRLLEDFR…HILAKLEKYY (343 aa)). Pumilio repeat units follow at residues 849–884 (EIAG…LVFN), 885–920 (EILQ…ALAE), 921–958 (RIRG…EMVR), 959–994 (ELDG…FIID), 995–1030 (AFKG…PILE), 1031–1066 (ELHQ…KIVA), 1067–1102 (EIRG…MLID), and 1106–1145 (TMND…IVMH). The segment at 864-868 (SRFIQ) is adenine-nucleotide binding in RNA target. The tract at residues 900–904 (NYVIQ) is uracil-nucleotide binding in RNA target. Residues 936–940 (CRVIQ) form an adenine-nucleotide binding in RNA target region. The tract at residues 974–978 (NHVVQ) is non-specific-nucleotide binding in RNA target. Positions 1010-1014 (CRVIQ) are adenine-nucleotide binding in RNA target. The tract at residues 1046–1050 (NYVIQ) is uracil-nucleotide binding in RNA target. Guanine-nucleotide binding in RNA target stretches follow at residues 1082 to 1086 (SNVVE) and 1083 to 1086 (NVVE). The interval 1125-1129 (NYVVQ) is uracil-nucleotide binding in RNA target.

In terms of tissue distribution, detected in embryonic male and female gonads, heart, liver and muscle. Detected in adult brain, testis, ovary, heart, lung, spleen, kidney and muscle.

It is found in the cytoplasm. Its subcellular location is the P-body. The protein localises to the cytoplasmic granule. Sequence-specific RNA-binding protein that acts as a post-transcriptional repressor by binding the 3'-UTR of mRNA targets. Binds to an RNA consensus sequence, the Pumilio Response Element (PRE), 5'-UGUANAUA-3', that is related to the Nanos Response Element (NRE). Mediates post-transcriptional repression of transcripts via different mechanisms: acts via direct recruitment of the CCR4-POP2-NOT deadenylase leading to translational inhibition and mRNA degradation. Also mediates deadenylation-independent repression by promoting accessibility of miRNAs. This is Pumilio homolog 1 (PUM1) from Gallus gallus (Chicken).